We begin with the raw amino-acid sequence, 950 residues long: Protein translocase subunit SecA (950 aa).

ATP-binding positions include Gln87, Gly105–Thr109, and Asp524. The segment at Gly908 to Glu932 is disordered. Residues Cys934, Cys936, Cys945, and His946 each contribute to the Zn(2+) site.

It belongs to the SecA family. As to quaternary structure, monomer and homodimer. Part of the essential Sec protein translocation apparatus which comprises SecA, SecYEG and auxiliary proteins SecDF-YajC and YidC. Requires Zn(2+) as cofactor.

Its subcellular location is the cell inner membrane. The protein localises to the cytoplasm. The catalysed reaction is ATP + H2O + cellular proteinSide 1 = ADP + phosphate + cellular proteinSide 2.. Part of the Sec protein translocase complex. Interacts with the SecYEG preprotein conducting channel. Has a central role in coupling the hydrolysis of ATP to the transfer of proteins into and across the cell membrane, serving both as a receptor for the preprotein-SecB complex and as an ATP-driven molecular motor driving the stepwise translocation of polypeptide chains across the membrane. This Bradyrhizobium sp. (strain BTAi1 / ATCC BAA-1182) protein is Protein translocase subunit SecA.